The sequence spans 111 residues: Somatostatin-1B (111 aa).

Residues 1–19 form the signal peptide; that stretch reads MQLLSSLVSLLLVLYSVRA. Positions 20-87 are excised as a propeptide; sequence AAVLPVEERN…RLEERAVYNR (68 aa). A disulfide bridge links cysteine 100 with cysteine 111.

It belongs to the somatostatin family.

It is found in the secreted. In terms of biological role, somatostatin inhibits the release of somatotropin. The sequence is that of Somatostatin-1B (sst1b) from Carassius auratus (Goldfish).